A 349-amino-acid polypeptide reads, in one-letter code: MSNLNGFIVVDKPKGPTSHQIDSWIRDITGEPRVGHIGTLDPGVSGVLVMALGKATKLIDIVHRESKEYVSVLRTYDKYDHDSIKSVFKEFTGKIYQIPPVRSAVSRELRIREIYNLELLEMDEKFVLFKVCCESGTYIRTLCTDIGYVLGSGGQMAELRRTRTGPFDESMCHTLQEVSDAFKLKSMGNEKLFKNIFIPMDFIFIKYPKVIVKETALKNIAHGSDIYPAGIHAITGSPKKGDVVAVYTEKNELVATGTMMVNADEIYDLKVIDIDNVLIETGDNDGKDSLVRKDNRWKDIPVQKPERKLHGNLQGSQEWKDTGNRGNPKRGGTGSKGFSSGFRKRKAKR.

The active-site Nucleophile is the D41. The PUA domain maps to 207–279 (YPKVIVKETA…KVIDIDNVLI (73 aa)). Positions 300–309 (IPVQKPERKL) are enriched in basic and acidic residues. Positions 300–349 (IPVQKPERKLHGNLQGSQEWKDTGNRGNPKRGGTGSKGFSSGFRKRKAKR) are disordered.

This sequence belongs to the pseudouridine synthase TruB family. Type 2 subfamily.

It catalyses the reaction uridine(55) in tRNA = pseudouridine(55) in tRNA. Its function is as follows. Could be responsible for synthesis of pseudouridine from uracil-55 in the psi GC loop of transfer RNAs. The sequence is that of Probable tRNA pseudouridine synthase B from Picrophilus torridus (strain ATCC 700027 / DSM 9790 / JCM 10055 / NBRC 100828 / KAW 2/3).